Here is a 301-residue protein sequence, read N- to C-terminus: MSTDKTYCGFIAIVGRPNVGKSTLLNKLLGQKISITSRKAQTTRHRIVGIHTEGPYQAIYVDTPGLHMEEKRAINRLMNKAASSSIGDVELVIFVVEGTRWTPDDEMVLNKLRDGKAPVILAVNKVDNVQEKADLLPHLQFLASQMNFLDIVPISAETGMNVDTIAGIVRKHLPEAIHHFPEDYITDRSQRFMASEIIREKLMRFLGAELPYSVTVEIERFVTNERGGYDINGLILVEREGQKKMVIGNKGAKIKTIGIEARKDMQEMFEAPVHLELWVKVKSGWADDERALRSLGYVDDL.

The Era-type G domain maps to 7 to 175; sequence YCGFIAIVGR…AGIVRKHLPE (169 aa). The interval 15 to 22 is G1; sequence GRPNVGKS. 15-22 contacts GTP; that stretch reads GRPNVGKS. The G2 stretch occupies residues 41-45; that stretch reads QTTRH. A G3 region spans residues 62–65; it reads DTPG. GTP is bound by residues 62-66 and 124-127; these read DTPGL and NKVD. Residues 124-127 form a G4 region; that stretch reads NKVD. The segment at 154–156 is G5; the sequence is ISA. In terms of domain architecture, KH type-2 spans 206-283; that stretch reads LGAELPYSVT…HLELWVKVKS (78 aa).

It belongs to the TRAFAC class TrmE-Era-EngA-EngB-Septin-like GTPase superfamily. Era GTPase family. In terms of assembly, monomer.

It is found in the cytoplasm. The protein localises to the cell inner membrane. Its function is as follows. An essential GTPase that binds both GDP and GTP, with rapid nucleotide exchange. Plays a role in 16S rRNA processing and 30S ribosomal subunit biogenesis and possibly also in cell cycle regulation and energy metabolism. The sequence is that of GTPase Era from Salmonella agona (strain SL483).